The chain runs to 390 residues: cAMP-dependent protein kinase regulatory subunit (390 aa).

Residues 1–17 show a composition bias toward polar residues; that stretch reads MSASGFTSPFGANSNPF. The tract at residues 1–81 is disordered; the sequence is MSASGFTSPF…RPQNPDGYPA (81 aa). The interval 1-129 is dimerization and phosphorylation; sequence MSASGFTSPF…RLKKAIQGNF (129 aa). Ser90 is subject to Phosphoserine. 3',5'-cyclic AMP contacts are provided by residues 130-261, Glu208, Arg217, 262-383, Glu329, and Arg338; these read LFSH…EEVP and ILST…GVEE.

It belongs to the cAMP-dependent kinase regulatory chain family. In terms of assembly, tetramer, composed of 2 regulatory (R) and 2 catalytic (C) subunits. In the presence of cAMP it dissociates into 2 active monomeric C subunits and an R dimer.

The protein is cAMP-dependent protein kinase regulatory subunit (SUM1) of Pyricularia oryzae (strain 70-15 / ATCC MYA-4617 / FGSC 8958) (Rice blast fungus).